A 448-amino-acid polypeptide reads, in one-letter code: Protein arginine N-methyltransferase 2 (448 aa).

Interaction with ESR1 regions lie at residues 1 to 289 (MEAP…SALK) and 145 to 287 (KESL…NLSA). Positions 42–101 (LQPEEFVAIADYTATDETQLSFLRGEKILILRQTTADWWWGERAGCCGYIPANHLGKQLE) constitute an SH3 domain. Asymmetric dimethylarginine occurs at positions 73 and 84. Residues 95 to 219 (HLGKQLEEYD…DVVLPEKVDV (125 aa)) are interaction with RB1. The SAM-dependent MTase PRMT-type domain maps to 111–414 (DEEYFDSYGT…CCVTKKSGME (304 aa)). S-adenosyl-L-methionine is bound by residues H124, R133, G157, E180, and E209. Catalysis depends on residues E223 and E232.

The protein belongs to the class I-like SAM-binding methyltransferase superfamily. Protein arginine N-methyltransferase family. As to quaternary structure, self-associates. Interacts with HNRNPUL1. Interacts with NFKBIA. Interacts with NCOA6 coactivator. Interacts (via SH3 domain) with PRMT8. Interacts with AR. Interacts with ESR1, ESR2, PGR, PPARG, RARA, RXRA and THRB. Interacts with RB1 and E2F1. In terms of tissue distribution, expressed in liver, pancreas, lung, brain, skeletal muscle, heart, muscle and fat.

It localises to the cytoplasm. The protein localises to the nucleus. The catalysed reaction is L-arginyl-[protein] + 2 S-adenosyl-L-methionine = N(omega),N(omega)-dimethyl-L-arginyl-[protein] + 2 S-adenosyl-L-homocysteine + 2 H(+). Functionally, arginine methyltransferase that methylates the guanidino nitrogens of arginyl residues in proteins such as STAT3, FBL, histone H4. May inhibit NF-kappa-B transcription, and promote apoptosis. Represses E2F1 transcriptional activity (in a RB1-dependent manner). Has a negative regulation effect on G1 to S transition of mitotic cell cycle. Involved in growth regulation. Acts as a coactivator (with NCOA2) of the androgen receptor (AR)-mediated transactivation. Acts as a coactivator (with estrogen) of estrogen receptor (ER)-mediated transactivation. Enhances PGR, PPARG, RARA-mediated transactivation. In Mus musculus (Mouse), this protein is Protein arginine N-methyltransferase 2 (Prmt2).